Here is a 70-residue protein sequence, read N- to C-terminus: NADH dehydrogenase [ubiquinone] 1 alpha subcomplex subunit 1 (70 aa).

A helical transmembrane segment spans residues 1–21 (MWFEILPGLAIMGVCLVIPGV).

This sequence belongs to the complex I NDUFA1 subunit family. Complex I is composed of 45 different subunits.

The protein localises to the mitochondrion inner membrane. In terms of biological role, accessory subunit of the mitochondrial membrane respiratory chain NADH dehydrogenase (Complex I), that is believed not to be involved in catalysis. Complex I functions in the transfer of electrons from NADH to the respiratory chain. The immediate electron acceptor for the enzyme is believed to be ubiquinone. This Mus musculus (Mouse) protein is NADH dehydrogenase [ubiquinone] 1 alpha subcomplex subunit 1 (Ndufa1).